A 117-amino-acid polypeptide reads, in one-letter code: Probable prefoldin subunit 1 (117 aa).

It belongs to the prefoldin subunit beta family. In terms of assembly, heterohexamer of two PFD-alpha type and four PFD-beta type subunits. As to expression, expressed in the distal cell tip of developing embryos.

It is found in the cytoplasm. In terms of biological role, binds specifically to cytosolic chaperonin (c-CPN) and transfers target proteins to it. Binds to nascent polypeptide chain and promotes folding in an environment in which there are many competing pathways for nonnative proteins. Has a role in gonadogenesis. In Caenorhabditis elegans, this protein is Probable prefoldin subunit 1 (pfd-1).